Here is a 276-residue protein sequence, read N- to C-terminus: 4-diphosphocytidyl-2-C-methyl-D-erythritol kinase (276 aa).

K13 is an active-site residue. 94–104 (PHAGGIGGGSA) provides a ligand contact to ATP. The active site involves D131.

Belongs to the GHMP kinase family. IspE subfamily.

It catalyses the reaction 4-CDP-2-C-methyl-D-erythritol + ATP = 4-CDP-2-C-methyl-D-erythritol 2-phosphate + ADP + H(+). It functions in the pathway isoprenoid biosynthesis; isopentenyl diphosphate biosynthesis via DXP pathway; isopentenyl diphosphate from 1-deoxy-D-xylulose 5-phosphate: step 3/6. In terms of biological role, catalyzes the phosphorylation of the position 2 hydroxy group of 4-diphosphocytidyl-2C-methyl-D-erythritol. This Jannaschia sp. (strain CCS1) protein is 4-diphosphocytidyl-2-C-methyl-D-erythritol kinase.